The primary structure comprises 648 residues: Rho GTPase-activating protein 25 (648 aa).

The region spanning 46-151 (RPIKVGWLKK…WVKFLRRVAG (106 aa)) is the PH domain. The Rho-GAP domain maps to 160-354 (QRLDETVAYE…MMIRDHEVLF (195 aa)). The disordered stretch occupies residues 356–559 (KSKDAPISPP…DLDSLQRTVQ (204 aa)). A phosphoserine mark is found at Ser-363, Ser-396, and Ser-403. The span at 393–410 (RTDSFSNTASSPDATSPT) shows a compositional bias: polar residues. Thr-407 is subject to Phosphothreonine. Positions 417–431 (QHQEDSGKAPRENPG) are enriched in basic and acidic residues. Polar residues-rich tracts occupy residues 453-462 (SAFQGTTSSK) and 497-515 (DQRTSTYDNVPTSPQSQGN). Ser-537 bears the Phosphoserine mark. Positions 540–641 (EAGSKNSGED…VKEFVKSMEK (102 aa)) form a coiled coil.

GTPase activator for the Rho-type GTPases by converting them to an inactive GDP-bound state. This chain is Rho GTPase-activating protein 25 (Arhgap25), found in Mus musculus (Mouse).